The primary structure comprises 110 residues: Parvalbumin alpha (110 aa).

At serine 2 the chain carries N-acetylserine. Residues serine 2, serine 8, and serine 24 each carry the phosphoserine modification. EF-hand domains lie at 39–74 and 78–110; these read KNPD…FSSD and LSAK…VAES. The Ca(2+) site is built by aspartate 52, aspartate 54, serine 56, phenylalanine 58, glutamate 60, glutamate 63, aspartate 91, aspartate 93, aspartate 95, lysine 97, and glutamate 102.

Expressed in the modiolar nerve root (at protein level).

In terms of biological role, in muscle, parvalbumin is thought to be involved in relaxation after contraction. It binds two calcium ions. This is Parvalbumin alpha (Pvalb) from Mus musculus (Mouse).